The following is an 89-amino-acid chain: Small ribosomal subunit protein uS17 (89 aa).

It belongs to the universal ribosomal protein uS17 family. As to quaternary structure, part of the 30S ribosomal subunit.

Its function is as follows. One of the primary rRNA binding proteins, it binds specifically to the 5'-end of 16S ribosomal RNA. This is Small ribosomal subunit protein uS17 from Baumannia cicadellinicola subsp. Homalodisca coagulata.